We begin with the raw amino-acid sequence, 173 residues long: Glycine cleavage system H protein, mitochondrial (173 aa).

A mitochondrion-targeting transit peptide spans 1–48 (MALRAVRSVRAAVGGLRAISAPSAPCLPRPWGLRAGAVRELRTGPALL). The Lipoyl-binding domain maps to 66 to 148 (VGTVGISNFA…YEDGWLIKMT (83 aa)). The residue at position 107 (Lys-107) is an N6-lipoyllysine.

This sequence belongs to the GcvH family. In terms of assembly, interacts with GLDC. The glycine cleavage system is composed of four proteins: P (GLDC), T (GCST), L (DLD) and H (GCSH). (R)-lipoate serves as cofactor.

It localises to the mitochondrion. In terms of biological role, the glycine cleavage system catalyzes the degradation of glycine. The H protein (GCSH) shuttles the methylamine group of glycine from the P protein (GLDC) to the T protein (GCST). Has a pivotal role in the lipoylation of enzymes involved in cellular energetics such as the mitochondrial dihydrolipoyllysine-residue acetyltransferase component of pyruvate dehydrogenase complex (DLAT), and the mitochondrial dihydrolipoyllysine-residue succinyltransferase component of 2-oxoglutarate dehydrogenase complex (DLST). This Bos taurus (Bovine) protein is Glycine cleavage system H protein, mitochondrial.